Consider the following 250-residue polypeptide: Acetylglutamate kinase (250 aa).

Substrate contacts are provided by residues 41–42 (GG), Arg-63, and Asn-156.

Belongs to the acetylglutamate kinase family. ArgB subfamily.

Its subcellular location is the cytoplasm. It carries out the reaction N-acetyl-L-glutamate + ATP = N-acetyl-L-glutamyl 5-phosphate + ADP. It functions in the pathway amino-acid biosynthesis; L-arginine biosynthesis; N(2)-acetyl-L-ornithine from L-glutamate: step 2/4. Its function is as follows. Catalyzes the ATP-dependent phosphorylation of N-acetyl-L-glutamate. The polypeptide is Acetylglutamate kinase (Listeria monocytogenes serovar 1/2a (strain ATCC BAA-679 / EGD-e)).